We begin with the raw amino-acid sequence, 109 residues long: Cysteine-rich venom protein 7 (109 aa).

The signal sequence occupies residues 1 to 21 (MSKVFVIILVALMVAISIASA). 5 disulfides stabilise this stretch: cysteine 30-cysteine 47, cysteine 37-cysteine 52, cysteine 46-cysteine 58, cysteine 70-cysteine 90, and cysteine 78-cysteine 98.

In terms of tissue distribution, expressed by the venom gland.

It localises to the secreted. This chain is Cysteine-rich venom protein 7, found in Pimpla hypochondriaca (Parasitoid wasp).